Consider the following 242-residue polypeptide: 1-(5-phosphoribosyl)-5-[(5-phosphoribosylamino)methylideneamino] imidazole-4-carboxamide isomerase (242 aa).

D10 serves as the catalytic Proton acceptor. Catalysis depends on D131, which acts as the Proton donor.

The protein belongs to the HisA/HisF family.

It localises to the cytoplasm. The catalysed reaction is 1-(5-phospho-beta-D-ribosyl)-5-[(5-phospho-beta-D-ribosylamino)methylideneamino]imidazole-4-carboxamide = 5-[(5-phospho-1-deoxy-D-ribulos-1-ylimino)methylamino]-1-(5-phospho-beta-D-ribosyl)imidazole-4-carboxamide. Its pathway is amino-acid biosynthesis; L-histidine biosynthesis; L-histidine from 5-phospho-alpha-D-ribose 1-diphosphate: step 4/9. This is 1-(5-phosphoribosyl)-5-[(5-phosphoribosylamino)methylideneamino] imidazole-4-carboxamide isomerase from Granulibacter bethesdensis (strain ATCC BAA-1260 / CGDNIH1).